The following is a 170-amino-acid chain: F1 capsule antigen (170 aa).

The signal sequence occupies residues 1 to 21; that stretch reads MKKISSVIAIALFGTIATANA. The tract at residues 100–150 is contains potential antigenic determinants that may stimulate T-cells; it reads GNNHQFTTKVIGKDSRDFDISPKVNGENLVGDDVVLATGSQDFFVRSIGSK.

It localises to the secreted. The protein localises to the capsule. The polypeptide is F1 capsule antigen (caf1) (Yersinia pestis).